The sequence spans 863 residues: Glycogen phosphorylase (863 aa).

Lys618 is modified (N6-(pyridoxal phosphate)lysine).

The protein belongs to the glycogen phosphorylase family. Requires pyridoxal 5'-phosphate as cofactor.

It carries out the reaction [(1-&gt;4)-alpha-D-glucosyl](n) + phosphate = [(1-&gt;4)-alpha-D-glucosyl](n-1) + alpha-D-glucose 1-phosphate. Functionally, phosphorylase is an important allosteric enzyme in carbohydrate metabolism. Enzymes from different sources differ in their regulatory mechanisms and in their natural substrates. However, all known phosphorylases share catalytic and structural properties. This Mycobacterium bovis (strain ATCC BAA-935 / AF2122/97) protein is Glycogen phosphorylase (glgP).